Here is a 170-residue protein sequence, read N- to C-terminus: MIDADGFRPNVGIILTNHQGQLLWARRVGGQDAWQFPQGGINAHESPEQALYRELHEEVGLYPQDVEILACTRGWLRYRLPHRLVRHNSLPLCVGQKQKWFLLRLLSDDARVCLENGGRAEFDDWRWVSYWYPLGKVVAFKRDVYRRALRELSLAHAQLENSNRKELSRG.

The Nudix hydrolase domain maps to 6–150; the sequence is GFRPNVGIIL…KRDVYRRALR (145 aa). The Nudix box motif lies at 39–60; the sequence is GGINAHESPEQALYRELHEEVG.

This sequence belongs to the Nudix hydrolase family. RppH subfamily. It depends on a divalent metal cation as a cofactor.

In terms of biological role, accelerates the degradation of transcripts by removing pyrophosphate from the 5'-end of triphosphorylated RNA, leading to a more labile monophosphorylated state that can stimulate subsequent ribonuclease cleavage. In Cellvibrio japonicus (strain Ueda107) (Pseudomonas fluorescens subsp. cellulosa), this protein is RNA pyrophosphohydrolase.